The following is a 287-amino-acid chain: Heavy metal-associated isoprenylated plant protein 4 (287 aa).

HMA domains follow at residues 14 to 80 (IITA…VELI) and 112 to 176 (IRTT…KHAE). Residues Cys25, Cys28, Cys123, and Cys126 each contribute to the a metal cation site. The stretch at 179 to 235 (SSKTEEEKKKEEEDKKKKEEEDKKKKEDEKKKEEEKKKEEENKKKEGEKKKEEVKVE) forms a coiled coil. Residues 181-232 (KTEEEKKKEEEDKKKKEEEDKKKKEDEKKKEEEKKKEEENKKKEGEKKKEEV) are disordered. Cys284 carries the post-translational modification Cysteine methyl ester. A lipid anchor (S-farnesyl cysteine) is attached at Cys284. Positions 285–287 (RIV) are cleaved as a propeptide — removed in mature form.

Belongs to the HIPP family.

In terms of biological role, heavy-metal-binding protein. The sequence is that of Heavy metal-associated isoprenylated plant protein 4 from Arabidopsis thaliana (Mouse-ear cress).